We begin with the raw amino-acid sequence, 405 residues long: Riboflavin biosynthesis protein RibBA (405 aa).

The segment at 1 to 205 (MSEIQLNTIE…IKDLIAYRLR (205 aa)) is DHBP synthase. D-ribulose 5-phosphate contacts are provided by residues 30-31 (RE), Asp35, 144-148 (RAGHT), and Glu168. Residue Glu31 coordinates Mg(2+). Position 147 (His147) interacts with Mg(2+). The interval 206–405 (TESIVENGVE…RMGHVLHNIK (200 aa)) is GTP cyclohydrolase II. Position 256-260 (256-260 (RVHSS)) interacts with GTP. Cys261, Cys272, and Cys274 together coordinate Zn(2+). Residues Gln277, 299–301 (EGR), and Thr321 each bind GTP. The active-site Proton acceptor; for GTP cyclohydrolase activity is Asp333. Residue Arg335 is the Nucleophile; for GTP cyclohydrolase activity of the active site. GTP-binding residues include Ser356 and Lys361.

It in the N-terminal section; belongs to the DHBP synthase family. In the C-terminal section; belongs to the GTP cyclohydrolase II family. Mg(2+) is required as a cofactor. Mn(2+) serves as cofactor. Requires Zn(2+) as cofactor.

It carries out the reaction D-ribulose 5-phosphate = (2S)-2-hydroxy-3-oxobutyl phosphate + formate + H(+). The catalysed reaction is GTP + 4 H2O = 2,5-diamino-6-hydroxy-4-(5-phosphoribosylamino)-pyrimidine + formate + 2 phosphate + 3 H(+). It functions in the pathway cofactor biosynthesis; riboflavin biosynthesis; 2-hydroxy-3-oxobutyl phosphate from D-ribulose 5-phosphate: step 1/1. It participates in cofactor biosynthesis; riboflavin biosynthesis; 5-amino-6-(D-ribitylamino)uracil from GTP: step 1/4. Functionally, catalyzes the conversion of D-ribulose 5-phosphate to formate and 3,4-dihydroxy-2-butanone 4-phosphate. Catalyzes the conversion of GTP to 2,5-diamino-6-ribosylamino-4(3H)-pyrimidinone 5'-phosphate (DARP), formate and pyrophosphate. This Parabacteroides distasonis (strain ATCC 8503 / DSM 20701 / CIP 104284 / JCM 5825 / NCTC 11152) protein is Riboflavin biosynthesis protein RibBA.